Here is a 350-residue protein sequence, read N- to C-terminus: Galactokinase (350 aa).

14-17 provides a ligand contact to substrate; sequence EHTD. Residues S46 and 96-102 each bind ATP; that span reads GAGLSSS. Residues S102 and E134 each contribute to the Mg(2+) site. The active-site Proton acceptor is D146. Y196 lines the substrate pocket.

Belongs to the GHMP kinase family. GalK subfamily.

The protein localises to the cytoplasm. It catalyses the reaction alpha-D-galactose + ATP = alpha-D-galactose 1-phosphate + ADP + H(+). The protein operates within carbohydrate metabolism; galactose metabolism. Its function is as follows. Catalyzes the transfer of the gamma-phosphate of ATP to D-galactose to form alpha-D-galactose-1-phosphate (Gal-1-P). The chain is Galactokinase from Thermotoga petrophila (strain ATCC BAA-488 / DSM 13995 / JCM 10881 / RKU-1).